We begin with the raw amino-acid sequence, 207 residues long: MYSFLFKYIIIGDTGVGKSCLLLQFTDKRFQPVHDLTIGVEFGARMITIDNKAIKLQIWDTAGQESFRSITRSYYRGSAGALLVYDITRRDTFNHLTCWLKDARSYANSNMTIILIGNKSDMESKRAVSYEEGRQFADENGLIFLETSAKTASNVEEAFVNTASKIYEKIQKGDFDINNESFGIKLGAPTSKQDGTDQKPAGGGCCK.

12 to 20 (GDTGVGKSC) contacts GTP. The Effector region motif lies at 34–42 (HDLTIGVEF). GTP is bound by residues 60-64 (DTAGQ), 118-121 (NKSD), and 148-150 (SAK). The interval 187 to 207 (GAPTSKQDGTDQKPAGGGCCK) is disordered. S-geranylgeranyl cysteine attachment occurs at residues cysteine 205 and cysteine 206.

Belongs to the small GTPase superfamily. Rab family.

It localises to the cell membrane. The catalysed reaction is GTP + H2O = GDP + phosphate + H(+). With respect to regulation, regulated by guanine nucleotide exchange factors (GEFs) which promote the exchange of bound GDP for free GTP, GTPase activating proteins (GAPs) which increase the GTP hydrolysis activity, and GDP dissociation inhibitors which inhibit the dissociation of the nucleotide from the GTPase. The small GTPases Rab are key regulators of intracellular membrane trafficking, from the formation of transport vesicles to their fusion with membranes. Rabs cycle between active GTP-bound and inactive GDP-bound states. In their active state, drive transport of vesicular carriers from donor organelles to acceptor organelles to regulate the membrane traffic that maintains organelle identity and morphology. This is Ras-related protein Rab-2A (rab2A) from Dictyostelium discoideum (Social amoeba).